We begin with the raw amino-acid sequence, 535 residues long: Glutamate--cysteine ligase (535 aa).

It belongs to the glutamate--cysteine ligase type 1 family. Type 1 subfamily.

The enzyme catalyses L-cysteine + L-glutamate + ATP = gamma-L-glutamyl-L-cysteine + ADP + phosphate + H(+). Its pathway is sulfur metabolism; glutathione biosynthesis; glutathione from L-cysteine and L-glutamate: step 1/2. The polypeptide is Glutamate--cysteine ligase (Pseudomonas syringae pv. syringae (strain B728a)).